The sequence spans 823 residues: Bifunctional enzyme flvA (823 aa).

Positions 56-535 (TAKFEMALMP…QRLYDAKFYI (480 aa)) are pyridoxal 5'-phosphate-dependent lyase. The residue at position 331 (K331) is an N6-(pyridoxal phosphate)lysine. The interval 573 to 823 (DFDALQQVSH…TLPMNVPLWL (251 aa)) is alpha-ketoglutarate-dependent oxygenase. The Fe cation site is built by H703 and D705.

The protein in the N-terminal section; belongs to the trans-sulfuration enzymes family. In the C-terminal section; belongs to the iron/ascorbate-dependent oxidoreductase family. It depends on pyridoxal 5'-phosphate as a cofactor. The cofactor is Fe(2+).

The enzyme catalyses O-acetyl-L-homoserine + 3-methyl-2-oxobutanoate = (6S)-6-amino-3,3-dimethyl-2-oxoheptanedioate + acetate + H(+). It carries out the reaction (6S)-3,3-dimethylpiperidine-2,6-dicarboxylate + 2-oxoglutarate + AH2 + O2 + H(+) = (2S)-5,5-dimethylpiperidine-2-carboxylate + succinate + A + 2 CO2 + H2O. The protein operates within secondary metabolite biosynthesis; terpenoid biosynthesis. Its function is as follows. Bifunctional enzyme; part of the gene cluster that mediates the biosynthesis of flavunoidine, an alkaloidal terpenoid with a tetracyclic cage-like core connected to dimethylcadaverine via a C-N bond and acylated with 5,5-dimethyl-L-pipecolate. The tetracyclic core is synthesized by the terpene cyclase flvE and the cytochrome P450 monooxygenase flvD. The terpene cyclase flvE catalyzes the cyclization of farnesyl pyrophosphate (FPP) to form (1R,4R,5S)-(+)-acoradiene and the cytochrome P450 monooxygenase flvD is then responsible for oxidative conversion of (1R,4R,5S)-(+)-acoradiene into the tetracyclic cage present in the final product flavunoidine. In parallel, the N-methyltransferase flvH dimethylates L-lysine to give N,N-dimethyl-L-Lysin which is decarboxylated by flvG to afford dimethylcadaverine. The terpene cyclase-like protein flvF is the enzyme that attaches the dimethylcadaverine precusor at the C-7 of the tetracyclic cage to yield pre-flavunoidine. The cytochrome monooxygenase flvC hydroxylates the C-10 position of pre-flavunoidine whereas the NRPS flvI acylates the terpenoid core at the hydroxylated C-10 with dimethylpipecolate to yield final flavunoidine. The bifunctional enzyme flvA and the dehydrogenase flvB are responsible for the synthesis of the dimethylpipecolate precursor. The PLP-dependent lyase domain of flvA might use L-O-acetyl-homoserine and alpha-keto-isovalerate to form an intermediary ketone that can cyclize intramolecularly to yield an imine. The imine can be reduced by flvB to yield the 6-carboxylated pipecolate. The C-terminal alpha-KG-dependent oxygenase domain of flvA is then proposed to catalyze the decarboxylation to yield dimethylpipecolate. The protein is Bifunctional enzyme flvA of Aspergillus flavus (strain ATCC 200026 / FGSC A1120 / IAM 13836 / NRRL 3357 / JCM 12722 / SRRC 167).